The sequence spans 401 residues: tRNA(Met) cytidine acetate ligase (401 aa).

ATP is bound by residues I7–H20, G102, N164, and R189.

This sequence belongs to the TmcAL family.

It localises to the cytoplasm. The catalysed reaction is cytidine(34) in elongator tRNA(Met) + acetate + ATP = N(4)-acetylcytidine(34) in elongator tRNA(Met) + AMP + diphosphate. Catalyzes the formation of N(4)-acetylcytidine (ac(4)C) at the wobble position of elongator tRNA(Met), using acetate and ATP as substrates. First activates an acetate ion to form acetyladenylate (Ac-AMP) and then transfers the acetyl group to tRNA to form ac(4)C34. The protein is tRNA(Met) cytidine acetate ligase of Thermoanaerobacter pseudethanolicus (strain ATCC 33223 / 39E) (Clostridium thermohydrosulfuricum).